Here is a 1498-residue protein sequence, read N- to C-terminus: Mitogen-activated protein kinase kinase kinase nsy-1 (1498 aa).

2 disordered regions span residues 1 to 35 and 190 to 209; these read MSQNNKRQVQHNHEMSNDVCPLPLPPRGAPPPTAY and LQSYDKNNNDDDSKPPFART. Pro residues predominate over residues 22 to 33; it reads LPLPPRGAPPPT. Residues 664 to 925 enclose the Protein kinase domain; sequence SNERVVLGKG…AKDLLQDPFI (262 aa). ATP contacts are provided by residues 670–678 and K693; that span reads LGKGTYGTV. D790 (proton acceptor) is an active-site residue. Residues 1022 to 1050 are disordered; the sequence is IDHARNRTFSSSSPVPDGQSSAGTNMSHP. The span at 1031–1042 shows a compositional bias: low complexity; it reads SSSSPVPDGQSS. Residues 1276 to 1314 are a coiled coil; it reads SREERVREDRKELRTLQEENEILIERLLQVERELNAQLK. A disordered region spans residues 1461 to 1498; that stretch reads QPVFLSPMRSRDDSLDDYHSSSADDMYTGAAAETSSGN. The span at 1469 to 1479 shows a compositional bias: basic and acidic residues; that stretch reads RSRDDSLDDYH.

It belongs to the protein kinase superfamily. STE Ser/Thr protein kinase family. MAP kinase kinase kinase subfamily. In terms of assembly, interacts with unc-43. Interacts with sek-1. The cofactor is Mg(2+). Post-translationally, may be phosphorylated upon pathogenic bacterial infection. May be regulated by proteasomal degradation mediated by the E3-ubiquitin ligase rle-1. In terms of tissue distribution, expressed in intestine, hypodermis, rectal gland cell and neurons including sensory AWC neurons.

The protein resides in the cell projection. It localises to the axon. Its subcellular location is the perikaryon. The catalysed reaction is L-seryl-[protein] + ATP = O-phospho-L-seryl-[protein] + ADP + H(+). It catalyses the reaction L-threonyl-[protein] + ATP = O-phospho-L-threonyl-[protein] + ADP + H(+). Functionally, serine/threonine-protein kinase which, by phosphorylating and activating sek-1, plays an important role in the activation of the p38 pathway also composed of the downstream effectors sek-1 and pmk-1. Downstream of CaMKII unc-43 and adapter protein tir-1, plays a role in determining asymmetric cell fates in olfactory AWC neurons during neuronal development. Activation results in the repression of odorant receptor str-2 expression in one of the 2 AWC neurons. Involved in resistance to pathogenic Gram-positive and Gram-negative bacterial and fungal infection. Involved in resistance to the nematotoxic C.cinerea galectin Cgl2. Probably by activating the sek1/pmk-1/skn-1 pathway, involved in the up-regulation of gcs-1 and glutathione-S-transferase gst-4 expression upon bacterial infection. Probably downstream of tir-1 and nipi-3, required for the expression of antimicrobial peptide nlp-29 in the epidermis in response to fungal infection or physical injury. Plays a role in resistance to several environmental stresses including oxidative, protein misfolding (ER) and osmotic stresses, and DNA-damaging reagents. Plays a role in the stabilization of transcription factor rnt-1 in the intestine during oxidative stress. Involved in germline apoptosis induced by heavy metals, such as Cu(2+). In addition, plays a role in the up-regulation of gcs-1 upon arsenite treatment, most likely through activation of pmk-1, to confer protection against toxicity induced by heavy metals. Plays a role downstream of tir-1 in regulating susceptibility to anoxia. Involved in egg laying. The sequence is that of Mitogen-activated protein kinase kinase kinase nsy-1 from Caenorhabditis elegans.